Here is a 637-residue protein sequence, read N- to C-terminus: Chaperone protein HtpG (637 aa).

Residues methionine 1–arginine 345 form an a; substrate-binding region. The interval glutamate 346 to lysine 562 is b. The segment at leucine 563–lysine 637 is c.

It belongs to the heat shock protein 90 family. As to quaternary structure, homodimer.

The protein resides in the cytoplasm. Molecular chaperone. Has ATPase activity. This is Chaperone protein HtpG from Shewanella sp. (strain W3-18-1).